Here is a 484-residue protein sequence, read N- to C-terminus: Protein arginine methyltransferase NDUFAF7 homolog, mitochondrial (484 aa).

Residues 1–12 (MFRSITQRVIRN) constitute a mitochondrion transit peptide.

Belongs to the NDUFAF7 family. As to quaternary structure, homodimer. Interacts with ndufs2.

It is found in the mitochondrion. It carries out the reaction L-arginyl-[protein] + 2 S-adenosyl-L-methionine = N(omega),N(omega)'-dimethyl-L-arginyl-[protein] + 2 S-adenosyl-L-homocysteine + 2 H(+). Functionally, involved in the assembly or stability of mitochondrial NADH:ubiquinone oxidoreductase complex (complex I). Acts as an arginine methyltransferase and probably acts by mediating arginine methylation of ndufs2. The sequence is that of Protein arginine methyltransferase NDUFAF7 homolog, mitochondrial from Dictyostelium discoideum (Social amoeba).